We begin with the raw amino-acid sequence, 513 residues long: Maturase K (513 aa).

The protein belongs to the intron maturase 2 family. MatK subfamily.

The protein localises to the plastid. It is found in the chloroplast. Functionally, usually encoded in the trnK tRNA gene intron. Probably assists in splicing its own and other chloroplast group II introns. The sequence is that of Maturase K from Saccharum officinarum (Sugarcane).